The chain runs to 400 residues: MGGWSSKPRQGMGTNLSVPNPLGFFPDHQLDPAFGANSHNPDWDFNPNKDHWPEANQVGAGAFGPGFTPPHGGLLGWSPQAQGVLTTVPVAPPPASTNRQSGRQPTPISPPLRDSHPQAMQWNSTTFHQALLDPRVRGLYFPAGGSSSGTVNPVPTTASPISSISSRTGDPAPNMENTTSGFLGPLLVLQAGFFLLTRILTIPQSLDSWWTSLNFLGGAPTCPGQNSQSPTSNHSPTSCPPICPGYRWMCLRRFIIFLFILLLCLIFLLVLLDYQGMLPVCPLLPGTSTTSTGPCKTCTIPAQGTSMFPSCCCTKPSDGNCTCIPIPSSWAFARFLWEGASVRFSWLSLLVPFVQWFVGLSPTVWLSVIWMMWYWGPSLYNILSPFLPLLPIFFCLWVYI.

An N-acetylmethionine modification is found at M1. Disordered stretches follow at residues 1–53 (MGGW…DHWP), 88–118 (VPVA…SHPQ), and 145–169 (GSSS…SRTG). G2 carries the N-myristoyl glycine; by host lipid modification. The interval 2 to 119 (GGWSSKPRQG…PPLRDSHPQA (118 aa)) is pre-S1. The segment at 2 to 174 (GGWSSKPRQG…SSRTGDPAPN (173 aa)) is pre-S. Topologically, residues 2-181 (GGWSSKPRQG…APNMENTTSG (180 aa)) are virion surface; in external conformation. At 2–253 (GGWSSKPRQG…PGYRWMCLRR (252 aa)) the chain is on the intravirion; in internal conformation side. Residue W4 is glycosylated (N-linked (GlcNAc...) asparagine). A compositionally biased stretch (polar residues) spans 96-106 (STNRQSGRQPT). Residues 120-174 (MQWNSTTFHQALLDPRVRGLYFPAGGSSSGTVNPVPTTASPISSISSRTGDPAPN) form a pre-S2 region. The span at 155–166 (PTTASPISSISS) shows a compositional bias: low complexity. A helical transmembrane segment spans residues 182 to 202 (FLGPLLVLQAGFFLLTRILTI). Over 203-253 (PQSLDSWWTSLNFLGGAPTCPGQNSQSPTSNHSPTSCPPICPGYRWMCLRR) the chain is Intravirion; in external conformation. Residues 254-274 (FIIFLFILLLCLIFLLVLLDY) form a helical membrane-spanning segment. The Virion surface segment spans residues 275 to 348 (QGMLPVCPLL…GASVRFSWLS (74 aa)). Residue N320 is glycosylated (N-linked (GlcNAc...) asparagine; by host). A helical transmembrane segment spans residues 349–369 (LLVPFVQWFVGLSPTVWLSVI). The Intravirion portion of the chain corresponds to 370 to 375 (WMMWYW). Residues 376 to 398 (GPSLYNILSPFLPLLPIFFCLWV) traverse the membrane as a helical segment. Topologically, residues 399 to 400 (YI) are virion surface.

The protein belongs to the orthohepadnavirus major surface antigen family. As to quaternary structure, in its internal form (Li-HBsAg), interacts with the capsid protein and with the isoform S. Interacts with host chaperone CANX. In terms of assembly, associates with host chaperone CANX through its pre-S2 N glycan; this association may be essential for isoform M proper secretion. Interacts with isoform L. Interacts with the antigens of satellite virus HDV (HDVAgs); this interaction is required for encapsidation of HDV genomic RNA. Isoform M is N-terminally acetylated by host at a ratio of 90%, and N-glycosylated by host at the pre-S2 region. Post-translationally, myristoylated.

Its subcellular location is the virion membrane. Functionally, the large envelope protein exists in two topological conformations, one which is termed 'external' or Le-HBsAg and the other 'internal' or Li-HBsAg. In its external conformation the protein attaches the virus to cell receptors and thereby initiating infection. This interaction determines the species specificity and liver tropism. This attachment induces virion internalization predominantly through caveolin-mediated endocytosis. The large envelope protein also assures fusion between virion membrane and endosomal membrane. In its internal conformation the protein plays a role in virion morphogenesis and mediates the contact with the nucleocapsid like a matrix protein. The middle envelope protein plays an important role in the budding of the virion. It is involved in the induction of budding in a nucleocapsid independent way. In this process the majority of envelope proteins bud to form subviral lipoprotein particles of 22 nm of diameter that do not contain a nucleocapsid. In Hepatitis B virus genotype C subtype adr (strain Japan/adr4/1983) (HBV-C), this protein is Large envelope protein.